A 366-amino-acid polypeptide reads, in one-letter code: MKFTIERSHLIKPLQQVSGTLGGRASLPILGNLLLKVEENQLSMTATDLEVELISRVTLEGEFEAGSITVPARKFLDICRGLPDSAVITVLLEGDRIQVRSGRSRFSLATLPASDFPNIEDWQSEVQVSLTQAELRGLIEKTQFSMANQDVRYYLNGMLFEIDGTTLRSVATDGHRMAVAQAQLGADFAQKQIIVPRKGVLELVKLLDAPEQPVVLQIGHSNLRAEVNHFVFTSKLVDGRFPDYRRVLPQHTSKTLQTGCEELRQAFSRAAILSNEKFRGVRVNLADNGMRITANNPEQEEAEELLDVSFEGEPIEIGFNVSYILDVLNTLRCDNVRVSMSDANASALVENVDDDSAMYVVMPIRL.

This sequence belongs to the beta sliding clamp family. Forms a ring-shaped head-to-tail homodimer around DNA which binds and tethers DNA polymerases and other proteins to the DNA. The DNA replisome complex has a single clamp-loading complex (3 tau and 1 each of delta, delta', psi and chi subunits) which binds 3 Pol III cores (1 core on the leading strand and 2 on the lagging strand) each with a beta sliding clamp dimer. Additional proteins in the replisome are other copies of gamma, psi and chi, Ssb, DNA helicase and RNA primase.

The protein localises to the cytoplasm. In terms of biological role, confers DNA tethering and processivity to DNA polymerases and other proteins. Acts as a clamp, forming a ring around DNA (a reaction catalyzed by the clamp-loading complex) which diffuses in an ATP-independent manner freely and bidirectionally along dsDNA. Initially characterized for its ability to contact the catalytic subunit of DNA polymerase III (Pol III), a complex, multichain enzyme responsible for most of the replicative synthesis in bacteria; Pol III exhibits 3'-5' exonuclease proofreading activity. The beta chain is required for initiation of replication as well as for processivity of DNA replication. The sequence is that of Beta sliding clamp (dnaN) from Vibrio cholerae serotype O1 (strain ATCC 39315 / El Tor Inaba N16961).